The following is a 285-amino-acid chain: Seipin (285 aa).

Residues 1-16 are Cytoplasmic-facing; it reads MKINVSRPLQFLQWSS. A helical transmembrane segment spans residues 17–37; the sequence is YIVVAFLIQLLIILPLSILIY. At 38 to 244 the chain is on the lumenal side; the sequence is HDFYLRLLPA…GLRNLMLRKR (207 aa). A helical transmembrane segment spans residues 245 to 265; the sequence is FLSYIIGISIFHCIICVLFFI. The Cytoplasmic portion of the chain corresponds to 266-285; the sequence is TGCTAFIFVRKGQEKSKKHS.

The protein belongs to the seipin family.

Its subcellular location is the endoplasmic reticulum membrane. Functionally, involved in lipid metabolism and lipid droplet (LD) morphology, number, and size. Facilitates initiation of LD formation, and ensures that vectorial budding of LDs from the ER is directed towards the cytoplasm. The protein is Seipin of Saccharomyces cerevisiae (strain ATCC 204508 / S288c) (Baker's yeast).